Here is a 187-residue protein sequence, read N- to C-terminus: Elongation factor P (187 aa).

This sequence belongs to the elongation factor P family.

Its subcellular location is the cytoplasm. The protein operates within protein biosynthesis; polypeptide chain elongation. Its function is as follows. Involved in peptide bond synthesis. Stimulates efficient translation and peptide-bond synthesis on native or reconstituted 70S ribosomes in vitro. Probably functions indirectly by altering the affinity of the ribosome for aminoacyl-tRNA, thus increasing their reactivity as acceptors for peptidyl transferase. This chain is Elongation factor P, found in Chromobacterium violaceum (strain ATCC 12472 / DSM 30191 / JCM 1249 / CCUG 213 / NBRC 12614 / NCIMB 9131 / NCTC 9757 / MK).